Here is a 331-residue protein sequence, read N- to C-terminus: XylDLEGF operon transcriptional activator 3 (331 aa).

The 102-residue stretch at 214-315 (ERVVQFIEDN…GELPSDTLRR (102 aa)) folds into the HTH araC/xylS-type domain. 2 consecutive DNA-binding regions (H-T-H motif) follow at residues 231-252 (ERLA…EKHA) and 282-305 (VTEM…RSTF).

It is found in the cytoplasm. Regulatory protein of the TOL plasmid xyl operons. XylS activates the xylXYZLTEGFJQKIH operon required for the degradation of toluene, m-xylene and p-xylene. The polypeptide is XylDLEGF operon transcriptional activator 3 (xylS3) (Pseudomonas putida (Arthrobacter siderocapsulatus)).